The following is a 972-amino-acid chain: UvrABC system protein A (972 aa).

ATP is bound at residue 32-39 (GLSGSGKS). The segment at 257 to 285 (CPNGHALAVDDLEPRSFSFNSPYGACPEC) adopts a C4-type; atypical zinc-finger fold. 2 consecutive ABC transporter domains span residues 315 to 601 (WSNG…KDSI) and 621 to 950 (VDPR…KFLA). Position 654–661 (654–661 (GVSGSGKS)) interacts with ATP. The C4-type zinc finger occupies 753-779 (CEACTGDGTIKIEMNFLPDVYVPCEVC).

This sequence belongs to the ABC transporter superfamily. UvrA family. Forms a heterotetramer with UvrB during the search for lesions.

It localises to the cytoplasm. In terms of biological role, the UvrABC repair system catalyzes the recognition and processing of DNA lesions. UvrA is an ATPase and a DNA-binding protein. A damage recognition complex composed of 2 UvrA and 2 UvrB subunits scans DNA for abnormalities. When the presence of a lesion has been verified by UvrB, the UvrA molecules dissociate. This Mycobacterium bovis (strain ATCC BAA-935 / AF2122/97) protein is UvrABC system protein A.